The sequence spans 70 residues: Protease inhibitor HPI (70 aa).

Alanine 2 bears the N-acetylalanine mark. An S-glutathionyl cysteine; alternate modification is found at cysteine 5.

This sequence belongs to the protease inhibitor I13 (potato type I serine protease inhibitor) family. In terms of assembly, monomer and homodimer; disulfide-linked. Occurs in 3 forms that differ in the modification of Cys-5, HPI-1 forms a homodimer through a disulfide bond, HPI-2a is modified by glutathionylation, and HPI-2b is covalently modified by addition of an unidentified adduct but not by a disulfide linkage.

Its function is as follows. Inhibitor of serine proteases, strongly inhibits subtilisin A and weakly inhibits trypsin. Does not inhibit chymotrypsin, papain, pepsin, pronase E, protease type XIII and thermolysin. HPI-1 inhibits subtilisin A with an Ki of 0.21 nM. HPI-2a inhibits subtilisin A with an Ki of 0.08 nM. HPI-2b inhibits subtilisin A with an Ki of 0.1 nM. This chain is Protease inhibitor HPI, found in Hevea brasiliensis (Para rubber tree).